We begin with the raw amino-acid sequence, 79 residues long: Small ribosomal subunit protein bS16cz (79 aa).

The protein belongs to the bacterial ribosomal protein bS16 family.

The protein localises to the plastid. Its subcellular location is the chloroplast. In Arabidopsis thaliana (Mouse-ear cress), this protein is Small ribosomal subunit protein bS16cz.